The primary structure comprises 356 residues: Protein RecA (356 aa).

68–75 contacts ATP; that stretch reads GQESSGKT.

The protein belongs to the RecA family.

It localises to the cytoplasm. Its function is as follows. Can catalyze the hydrolysis of ATP in the presence of single-stranded DNA, the ATP-dependent uptake of single-stranded DNA by duplex DNA, and the ATP-dependent hybridization of homologous single-stranded DNAs. It interacts with LexA causing its activation and leading to its autocatalytic cleavage. This Thermotoga sp. (strain RQ2) protein is Protein RecA.